The primary structure comprises 317 residues: Lipopolysaccharide heptosyltransferase 1 (317 aa).

Residues Thr-187, Thr-188, Lys-192, Glu-222, Met-242, Asp-261, Thr-262, Gly-263, and His-266 each coordinate ADP-L-glycero-beta-D-manno-heptose.

This sequence belongs to the glycosyltransferase 9 family.

It is found in the cell inner membrane. It carries out the reaction an alpha-Kdo-(2-&gt;4)-alpha-Kdo-(2-&gt;6)-lipid A + ADP-L-glycero-beta-D-manno-heptose = an L-alpha-D-Hep-(1-&gt;5)-[alpha-Kdo-(2-&gt;4)]-alpha-Kdo-(2-&gt;6)-lipid A + ADP + H(+). It functions in the pathway bacterial outer membrane biogenesis; LPS core biosynthesis. Glycosyltransferase involved in the biosynthesis of the core oligosaccharide region of lipopolysaccharide (LPS). Catalyzes the addition of the first heptose unit to one 3-deoxy-D-manno-octulosonic acid (Kdo) residue of the Kdo2-lipid A module. The protein is Lipopolysaccharide heptosyltransferase 1 of Salmonella typhimurium (strain LT2 / SGSC1412 / ATCC 700720).